The following is a 509-amino-acid chain: uncharacterized protein (509 aa).

Disordered stretches follow at residues 112 to 131, 152 to 325, 365 to 457, and 488 to 509; these read KSKQNNNGFNGHKGNFSENE, NKNT…NNDS, NNIN…PNQG, and AQQPVSQQNNNVETNQDNVQQQ. 2 stretches are compositionally biased toward low complexity: residues 116–127 and 153–184; these read NNNGFNGHKGNF and KNTIITRKNNNNNNSNNNNNNNNNYNQKSNTT. The segment covering 189–217 has biased composition (acidic residues); it reads YSDDDYQNEQNEFEEEDYDSNDDENDSHD. Positions 228-242 are enriched in polar residues; that stretch reads KTTNQLKRKVSSSFT. 2 stretches are compositionally biased toward low complexity: residues 243-325 and 365-397; these read NNNY…NNDS and NNINANNNNNNNNNNNNNNNLNDSTPNNQTNND. Over residues 398–422 the composition is skewed to polar residues; the sequence is LKSSNHSNYDFNYNTNERLSHSPIQ. Positions 423 to 442 are enriched in low complexity; that stretch reads THSSSNNSTPSNQSPTFPSN. Composition is skewed to polar residues over residues 443–457 and 496–509; these read YISQNANINYNPNQG and NNNVETNQDNVQQQ.

This is an uncharacterized protein from Dictyostelium discoideum (Social amoeba).